We begin with the raw amino-acid sequence, 227 residues long: Thymidylate kinase (227 aa).

Residue 7–14 (GIEGSGKT) participates in ATP binding.

This sequence belongs to the thymidylate kinase family.

The catalysed reaction is dTMP + ATP = dTDP + ADP. In terms of biological role, phosphorylation of dTMP to form dTDP in both de novo and salvage pathways of dTTP synthesis. This Desulforapulum autotrophicum (strain ATCC 43914 / DSM 3382 / VKM B-1955 / HRM2) (Desulfobacterium autotrophicum) protein is Thymidylate kinase.